The sequence spans 323 residues: Acetyl-coenzyme A carboxylase carboxyl transferase subunit alpha (323 aa).

One can recognise a CoA carboxyltransferase C-terminal domain in the interval 39 to 293 (RLSKKSQQLT…RRALADSLRQ (255 aa)).

This sequence belongs to the AccA family. Acetyl-CoA carboxylase is a heterohexamer composed of biotin carboxyl carrier protein (AccB), biotin carboxylase (AccC) and two subunits each of ACCase subunit alpha (AccA) and ACCase subunit beta (AccD).

The protein localises to the cytoplasm. It carries out the reaction N(6)-carboxybiotinyl-L-lysyl-[protein] + acetyl-CoA = N(6)-biotinyl-L-lysyl-[protein] + malonyl-CoA. The protein operates within lipid metabolism; malonyl-CoA biosynthesis; malonyl-CoA from acetyl-CoA: step 1/1. Its function is as follows. Component of the acetyl coenzyme A carboxylase (ACC) complex. First, biotin carboxylase catalyzes the carboxylation of biotin on its carrier protein (BCCP) and then the CO(2) group is transferred by the carboxyltransferase to acetyl-CoA to form malonyl-CoA. The protein is Acetyl-coenzyme A carboxylase carboxyl transferase subunit alpha of Burkholderia vietnamiensis (strain G4 / LMG 22486) (Burkholderia cepacia (strain R1808)).